The primary structure comprises 568 residues: bZIP transcription factor 60 (568 aa).

2 stretches are compositionally biased toward low complexity: residues 1-13 and 60-78; these read MAEPDLLAPFADL and TTSSSSSAAGSPEAGTSSA. Disordered regions lie at residues 1 to 29 and 45 to 134; these read MAEPDLLAPFADLPFPPGDDFPDFPTLGD and DFDV…RKKQ. Residues 1 to 240 lie on the Cytoplasmic side of the membrane; sequence MAEPDLLAPF…PAKKARKTKK (240 aa). The segment covering 103–113 has biased composition (basic and acidic residues); that stretch reads GGKDGKDDEAK. Positions 111 to 171 constitute a bZIP domain; sequence EAKRRARLVR…AENAALKQQL (61 aa). Residues 113–144 are basic motif; that stretch reads KRRARLVRNRESAHQSRQRKKQYVEELEGKVK. Residues 150–157 form a leucine-zipper region; the sequence is IADLTARI. Residues 241-261 traverse the membrane as a helical segment; sequence VAGVSLLGLLFLMMVCGCLVP. The Lumenal portion of the chain corresponds to 262–568; that stretch reads AVNRMYGAAY…LPFKSHSPHL (307 aa). N-linked (GlcNAc...) asparagine glycans are attached at residues asparagine 307, asparagine 452, asparagine 456, asparagine 488, and asparagine 499. The tract at residues 479 to 510 is disordered; that stretch reads AIPLRGSTSNDTDHFKAPPKNHSQSHAGRKPV.

The protein belongs to the bZIP family.

It localises to the endoplasmic reticulum membrane. It is found in the nucleus. In terms of biological role, transcription factor involved in endoplasmic reticulum (ER) stress response. Acts as a ER stress sensor and activates the transcription factor BZIP50 and the chaperone BIP1. The protein is bZIP transcription factor 60 of Oryza sativa subsp. japonica (Rice).